The chain runs to 37 residues: 24 kDa antigen (37 aa).

This is 24 kDa antigen from Plasmodium chabaudi.